A 97-amino-acid chain; its full sequence is YcgL domain-containing protein PA1295 (97 aa).

Positions 3–87 constitute a YcgL domain; it reads RICSVYKSPR…GEEEYIEHLP (85 aa).

In Pseudomonas aeruginosa (strain ATCC 15692 / DSM 22644 / CIP 104116 / JCM 14847 / LMG 12228 / 1C / PRS 101 / PAO1), this protein is YcgL domain-containing protein PA1295.